A 209-amino-acid chain; its full sequence is Holliday junction branch migration complex subunit RuvA (209 aa).

The tract at residues 1–64 (MIGKLKGLVD…EDSIKLYGFA (64 aa)) is domain I. Residues 65 to 143 (SETEREWFRL…ALGASLHTLA (79 aa)) are domain II. Residues 144-154 (GAGSEGAGVEA) are flexible linker. The tract at residues 155–209 (PASGAVSDAISVLVNLGFGRSQAAVAVAASSKALGSGAGAGDLAKRALQELAQSG) is domain III.

Belongs to the RuvA family. As to quaternary structure, homotetramer. Forms an RuvA(8)-RuvB(12)-Holliday junction (HJ) complex. HJ DNA is sandwiched between 2 RuvA tetramers; dsDNA enters through RuvA and exits via RuvB. An RuvB hexamer assembles on each DNA strand where it exits the tetramer. Each RuvB hexamer is contacted by two RuvA subunits (via domain III) on 2 adjacent RuvB subunits; this complex drives branch migration. In the full resolvosome a probable DNA-RuvA(4)-RuvB(12)-RuvC(2) complex forms which resolves the HJ.

It localises to the cytoplasm. Functionally, the RuvA-RuvB-RuvC complex processes Holliday junction (HJ) DNA during genetic recombination and DNA repair, while the RuvA-RuvB complex plays an important role in the rescue of blocked DNA replication forks via replication fork reversal (RFR). RuvA specifically binds to HJ cruciform DNA, conferring on it an open structure. The RuvB hexamer acts as an ATP-dependent pump, pulling dsDNA into and through the RuvAB complex. HJ branch migration allows RuvC to scan DNA until it finds its consensus sequence, where it cleaves and resolves the cruciform DNA. This is Holliday junction branch migration complex subunit RuvA from Methylocella silvestris (strain DSM 15510 / CIP 108128 / LMG 27833 / NCIMB 13906 / BL2).